The sequence spans 293 residues: Acidic endochitinase (293 aa).

The N-terminal stretch at 1 to 22 is a signal peptide; it reads MEKCFNIIPSLLLISLLIKSSN. Positions 24-293 constitute a GH18 domain; the sequence is AGIAVYWGQN…GYSNAIKGSV (270 aa). 2 disulfide bridges follow: cysteine 43/cysteine 90 and cysteine 73/cysteine 80. Residue glutamate 150 is the Proton donor of the active site. An intrachain disulfide couples cysteine 179 to cysteine 208.

Belongs to the glycosyl hydrolase 18 family. Chitinase class II subfamily.

The protein resides in the secreted. It localises to the extracellular space. The enzyme catalyses Random endo-hydrolysis of N-acetyl-beta-D-glucosaminide (1-&gt;4)-beta-linkages in chitin and chitodextrins.. In terms of biological role, this protein functions as a defense against chitin containing fungal pathogens. The protein is Acidic endochitinase of Cicer arietinum (Chickpea).